Reading from the N-terminus, the 426-residue chain is L-cysteine:1D-myo-inositol 2-amino-2-deoxy-alpha-D-glucopyranoside ligase (426 aa).

Cysteine 43 serves as a coordination point for Zn(2+). Residues 43-46 (CGIT), serine 58, and 81-83 (NVT) contribute to the L-cysteinyl-5'-AMP site. The short motif at 45 to 55 (ITPYDATHMGH) is the 'HIGH' region element. Residues 200-205 (ERGGDP) carry the 'ERGGDP' region motif. Tryptophan 241 is a binding site for L-cysteinyl-5'-AMP. Cysteine 245 is a Zn(2+) binding site. Residue 263 to 265 (GSD) coordinates L-cysteinyl-5'-AMP. Histidine 270 is a Zn(2+) binding site. Valine 296 lines the L-cysteinyl-5'-AMP pocket. A 'KMSKS' region motif is present at residues 302–306 (KMSKS).

The protein belongs to the class-I aminoacyl-tRNA synthetase family. MshC subfamily. Monomer. It depends on Zn(2+) as a cofactor.

The enzyme catalyses 1D-myo-inositol 2-amino-2-deoxy-alpha-D-glucopyranoside + L-cysteine + ATP = 1D-myo-inositol 2-(L-cysteinylamino)-2-deoxy-alpha-D-glucopyranoside + AMP + diphosphate + H(+). Its function is as follows. Catalyzes the ATP-dependent condensation of GlcN-Ins and L-cysteine to form L-Cys-GlcN-Ins. The protein is L-cysteine:1D-myo-inositol 2-amino-2-deoxy-alpha-D-glucopyranoside ligase of Arthrobacter sp. (strain FB24).